The following is a 66-amino-acid chain: UPF0337 protein SpyM3_1723 (66 aa).

The segment covering 1-10 has biased composition (basic and acidic residues); that stretch reads MSEEKLKSKI. A disordered region spans residues 1-23; sequence MSEEKLKSKIEQASGGLKEGAGK.

It belongs to the UPF0337 (CsbD) family.

The chain is UPF0337 protein SpyM3_1723 from Streptococcus pyogenes serotype M3 (strain ATCC BAA-595 / MGAS315).